The sequence spans 411 residues: Serine hydroxymethyltransferase (411 aa).

120-122 contributes to the (6S)-5,6,7,8-tetrahydrofolate binding site; that stretch reads GHL. The residue at position 225 (Lys-225) is an N6-(pyridoxal phosphate)lysine. Residue 350-352 coordinates (6S)-5,6,7,8-tetrahydrofolate; it reads SPF.

The protein belongs to the SHMT family. As to quaternary structure, homodimer. Pyridoxal 5'-phosphate is required as a cofactor.

Its subcellular location is the cytoplasm. It catalyses the reaction (6R)-5,10-methylene-5,6,7,8-tetrahydrofolate + glycine + H2O = (6S)-5,6,7,8-tetrahydrofolate + L-serine. It functions in the pathway one-carbon metabolism; tetrahydrofolate interconversion. The protein operates within amino-acid biosynthesis; glycine biosynthesis; glycine from L-serine: step 1/1. In terms of biological role, catalyzes the reversible interconversion of serine and glycine with tetrahydrofolate (THF) serving as the one-carbon carrier. This reaction serves as the major source of one-carbon groups required for the biosynthesis of purines, thymidylate, methionine, and other important biomolecules. Also exhibits THF-independent aldolase activity toward beta-hydroxyamino acids, producing glycine and aldehydes, via a retro-aldol mechanism. This Limosilactobacillus reuteri (strain DSM 20016) (Lactobacillus reuteri) protein is Serine hydroxymethyltransferase.